The chain runs to 398 residues: NADH-quinone oxidoreductase subunit D (398 aa).

This sequence belongs to the complex I 49 kDa subunit family. In terms of assembly, NDH-1 is composed of 14 different subunits. Subunits NuoB, C, D, E, F, and G constitute the peripheral sector of the complex.

It is found in the cell inner membrane. It carries out the reaction a quinone + NADH + 5 H(+)(in) = a quinol + NAD(+) + 4 H(+)(out). Its function is as follows. NDH-1 shuttles electrons from NADH, via FMN and iron-sulfur (Fe-S) centers, to quinones in the respiratory chain. The immediate electron acceptor for the enzyme in this species is believed to be ubiquinone. Couples the redox reaction to proton translocation (for every two electrons transferred, four hydrogen ions are translocated across the cytoplasmic membrane), and thus conserves the redox energy in a proton gradient. The protein is NADH-quinone oxidoreductase subunit D of Anaplasma marginale (strain St. Maries).